We begin with the raw amino-acid sequence, 560 residues long: Potassium-transporting ATPase potassium-binding subunit (560 aa).

12 consecutive transmembrane segments (helical) span residues 11-31 (IFLL…VAFF), 63-83 (SYCT…YGLL), 134-154 (FVTM…TALI), 179-199 (LLPL…PQTF), 254-274 (VIEM…YGHA), 282-302 (WVLF…VYNA), 329-349 (FGIP…TGSV), 356-376 (LTPI…VFGG), 379-399 (VGFV…GLMV), 417-437 (LIVI…AIAL), 488-508 (VVML…AGSL), and 530-550 (VILF…VLIL).

Belongs to the KdpA family. As to quaternary structure, the system is composed of three essential subunits: KdpA, KdpB and KdpC.

It is found in the cell membrane. In terms of biological role, part of the high-affinity ATP-driven potassium transport (or Kdp) system, which catalyzes the hydrolysis of ATP coupled with the electrogenic transport of potassium into the cytoplasm. This subunit binds the extracellular potassium ions and delivers the ions to the membrane domain of KdpB through an intramembrane tunnel. The chain is Potassium-transporting ATPase potassium-binding subunit from Geobacillus kaustophilus (strain HTA426).